Reading from the N-terminus, the 308-residue chain is Probable acetylxylan esterase A (308 aa).

The first 19 residues, 1-19, serve as a signal peptide directing secretion; that stretch reads MAPFSFLLTLLLYTLSAGA. Asn-141 is a glycosylation site (N-linked (GlcNAc...) asparagine). The Charge relay system role is filled by Ser-151. N-linked (GlcNAc...) asparagine glycosylation is present at Asn-193.

Belongs to the carbohydrate esterase 1 (CE1) family. AxeA subfamily. As to quaternary structure, monomer.

Its subcellular location is the secreted. The enzyme catalyses Deacetylation of xylans and xylo-oligosaccharides.. It functions in the pathway glycan degradation; xylan degradation. Functionally, acetylxylan esterase involved in the hydrolysis of xylan, a major structural heterogeneous polysaccharide found in plant biomass representing the second most abundant polysaccharide in the biosphere, after cellulose. Degrades acetylated xylans by cleaving acetyl side groups from the hetero-xylan backbone. This is Probable acetylxylan esterase A (axeA) from Aspergillus clavatus (strain ATCC 1007 / CBS 513.65 / DSM 816 / NCTC 3887 / NRRL 1 / QM 1276 / 107).